The chain runs to 499 residues: MAKLSKENLLLLFTVLGVVVGIGLGFSLRDPSKAWSKRHLSYLRFPGDLFVQMLKMLILPMIMSSIITSLASLDSGTAGRLGMVSMIYYTLTTFFAVFLGIVLVSVIKPGKWTTTNIEDLVGHVKTTPCVATAVDTIIDLMKSCFPENLIEATFRSQKICLKFFNGTTEIPPEIAMTMSPEQRAQFTEVPEKIVSDGMNILGLVVFSVALGIVIGVIGEDGKPMKNFFKSLEACSMKLIGWVIIYSPVGITFLIAAQIVGMKDPGQELHRLMGYVITVILGLLIHAFVVIPLLCVVLARRNPIKFVGGMAQALLTALATSSSSATLPLSIKCCEENNKVDPRVTRFVLPLGATINMDGTALYEAVAAIYISQCYGNDLSLGEVVLVSLTATLASIGAAGIPQAGIVTMIMVLIAIGLPTNLFILIFPVDFMLDRLRTTVNVHGDSIATAVIERLCEDQLQKGGHHLDTNDQGYSMLSTNASPDPKRITIGNNCENSHML.

Over 1-7 the chain is Cytoplasmic; sequence MAKLSKE. Transmembrane regions (helical) follow at residues 8 to 28, 50 to 70, and 87 to 107; these read NLLL…GFSL, FVQM…ITSL, and IYYT…VSVI. N-linked (GlcNAc...) asparagine glycosylation occurs at Asn-165. 3 helical membrane passes run 194-217, 227-254, and 276-297; these read VSDG…IGVI, FFKS…TFLI, and ITVI…CVVL. The segment at residues 303–333 is an intramembrane region (discontinuously helical); that stretch reads IKFVGGMAQALLTALATSSSSATLPLSIKCC. L-aspartate is bound at residue 320–322; it reads SSS. A helical membrane pass occupies residues 343-369; it reads VTRFVLPLGATINMDGTALYEAVAAIY. Na(+) contacts are provided by Gly-351, Thr-353, and Asn-355. L-aspartate contacts are provided by residues Thr-359, 400 to 404, Asp-433, and Asn-440; that span reads IPQAG. Positions 383 to 416 form an intramembrane region, discontinuously helical; that stretch reads VVLVSLTATLASIGAAGIPQAGIVTMIMVLIAIG. Residues 430-451 form a helical membrane-spanning segment; it reads FMLDRLRTTVNVHGDSIATAVI. Residues Asn-440 and Asp-444 each coordinate Na(+).

The protein belongs to the dicarboxylate/amino acid:cation symporter (DAACS) (TC 2.A.23) family.

The protein resides in the cell membrane. Functionally, sodium-dependent, high-affinity amino acid transporter that mediates the uptake of L-glutamate and also L-aspartate and D-aspartate. Functions as a symporter that transports one amino acid molecule together with two or three Na(+) ions and one proton, in parallel with the counter-transport of one K(+) ion. Mediates Cl(-) flux that is not coupled to amino acid transport; this avoids the accumulation of negative charges due to aspartate and Na(+) symport. This is Putative sodium-dependent excitatory amino acid transporter glt-4 (glt-4) from Caenorhabditis elegans.